The following is a 462-amino-acid chain: MQEGKISQIIGPVVDVDFPEGQLPSILDALTVTRQDGSKLVLETQQHLGEERVRTISMEGTDGLVRGMSVANTGRPIQAPVGAEVLGRMLNVVGEPIDGKGPVPSKKSYPIHRSAPKFDELSTKAEMFETGIKVIDLLEPYSRGGKTGLFGGAGVGKTVLIMELINNIAKEQSGYSVFAGVGERTREGNDLWHEMMESGVIDKTALVFGQMNEPPGARARVALTGLSIAEYFRDEEGRDVLLFIDNIFRFTQAGAEVSALLGRMPSAVGYQPTLGTEMGELQDRIVSTKKGSVTSVQAIYVPADDLTDPAPATAFTHLDATTVLSRQIAELGIYPAVDPLDSTSRILDPNIIGNDHYDTAQAVKQILQRYKDLQDIIAILGMDELSDEDKLVVARARKVQRFLSQPFFVAEAFTGLAGKYVKLEDTIKGFKEIIAGKHDSLPENAFYLVGTIEEAVEKAKKL.

Residue 151 to 158 (GGAGVGKT) participates in ATP binding.

The protein belongs to the ATPase alpha/beta chains family. F-type ATPases have 2 components, CF(1) - the catalytic core - and CF(0) - the membrane proton channel. CF(1) has five subunits: alpha(3), beta(3), gamma(1), delta(1), epsilon(1). CF(0) has three main subunits: a(1), b(2) and c(9-12). The alpha and beta chains form an alternating ring which encloses part of the gamma chain. CF(1) is attached to CF(0) by a central stalk formed by the gamma and epsilon chains, while a peripheral stalk is formed by the delta and b chains.

Its subcellular location is the cell inner membrane. The catalysed reaction is ATP + H2O + 4 H(+)(in) = ADP + phosphate + 5 H(+)(out). Its function is as follows. Produces ATP from ADP in the presence of a proton gradient across the membrane. The catalytic sites are hosted primarily by the beta subunits. In Chlorobaculum parvum (strain DSM 263 / NCIMB 8327) (Chlorobium vibrioforme subsp. thiosulfatophilum), this protein is ATP synthase subunit beta.